A 477-amino-acid chain; its full sequence is Ankyrin repeat, SAM and basic leucine zipper domain-containing protein 1 (477 aa).

Residues methionine 1 to glycine 24 form a disordered region. Phosphoserine occurs at positions 17, 18, and 20. 6 ANK repeats span residues glutamate 46–alanine 76, tyrosine 80–phenylalanine 109, aspartate 112–valine 146, arginine 150–threonine 179, asparagine 183–leucine 212, and aspartate 216–glycine 245. The region spanning serine 274 to glutamate 336 is the SAM domain.

In terms of assembly, interacts with DDX4, PIWIL1, RANBP9 and TDRD1.

The protein localises to the cytoplasm. Functionally, plays a central role during spermatogenesis by repressing transposable elements and preventing their mobilization, which is essential for the germline integrity. Acts via the piRNA metabolic process, which mediates the repression of transposable elements during meiosis by forming complexes composed of piRNAs and Piwi proteins and governs the methylation and subsequent repression of transposons. Its association with pi-bodies suggests a participation in the primary piRNAs metabolic process. Required prior to the pachytene stage to facilitate the production of multiple types of piRNAs, including those associated with repeats involved in the regulation of retrotransposons. May act by mediating protein-protein interactions during germ cell maturation. This Saimiri boliviensis boliviensis (Bolivian squirrel monkey) protein is Ankyrin repeat, SAM and basic leucine zipper domain-containing protein 1 (ASZ1).